A 258-amino-acid polypeptide reads, in one-letter code: Triosephosphate isomerase (258 aa).

9 to 11 (NWK) serves as a coordination point for substrate. H105 (electrophile) is an active-site residue. The active-site Proton acceptor is E176. Substrate is bound by residues G182 and S214.

It belongs to the triosephosphate isomerase family. Homodimer.

The protein localises to the cytoplasm. It catalyses the reaction D-glyceraldehyde 3-phosphate = dihydroxyacetone phosphate. It functions in the pathway carbohydrate biosynthesis; gluconeogenesis. The protein operates within carbohydrate degradation; glycolysis; D-glyceraldehyde 3-phosphate from glycerone phosphate: step 1/1. Its function is as follows. Involved in the gluconeogenesis. Catalyzes stereospecifically the conversion of dihydroxyacetone phosphate (DHAP) to D-glyceraldehyde-3-phosphate (G3P). The protein is Triosephosphate isomerase of Mycoplasmopsis agalactiae (strain NCTC 10123 / CIP 59.7 / PG2) (Mycoplasma agalactiae).